The primary structure comprises 416 residues: Multifunctional CCA protein (416 aa).

ATP contacts are provided by glycine 8 and arginine 11. Positions 8 and 11 each coordinate CTP. Positions 21 and 23 each coordinate Mg(2+). ATP is bound by residues arginine 91, arginine 137, and arginine 140. CTP-binding residues include arginine 91, arginine 137, and arginine 140. Residues 228–329 form the HD domain; sequence TGLHTMMVLA…IKLFDKADFW (102 aa).

It belongs to the tRNA nucleotidyltransferase/poly(A) polymerase family. Bacterial CCA-adding enzyme type 1 subfamily. In terms of assembly, monomer. Can also form homodimers and oligomers. It depends on Mg(2+) as a cofactor. Ni(2+) serves as cofactor.

The catalysed reaction is a tRNA precursor + 2 CTP + ATP = a tRNA with a 3' CCA end + 3 diphosphate. The enzyme catalyses a tRNA with a 3' CCA end + 2 CTP + ATP = a tRNA with a 3' CCACCA end + 3 diphosphate. In terms of biological role, catalyzes the addition and repair of the essential 3'-terminal CCA sequence in tRNAs without using a nucleic acid template. Adds these three nucleotides in the order of C, C, and A to the tRNA nucleotide-73, using CTP and ATP as substrates and producing inorganic pyrophosphate. tRNA 3'-terminal CCA addition is required both for tRNA processing and repair. Also involved in tRNA surveillance by mediating tandem CCA addition to generate a CCACCA at the 3' terminus of unstable tRNAs. While stable tRNAs receive only 3'-terminal CCA, unstable tRNAs are marked with CCACCA and rapidly degraded. The sequence is that of Multifunctional CCA protein from Shewanella sp. (strain MR-4).